An 84-amino-acid chain; its full sequence is uncharacterized protein (84 aa).

The segment at 1–21 (MYYRRQGEPQEMYGNGNNSVS) is disordered. Residues 49-69 (YIIYAIVAAILLLLFWLLYKK) form a helical membrane-spanning segment.

Its subcellular location is the membrane. This is an uncharacterized protein from Invertebrate iridescent virus 6 (IIV-6).